The following is a 937-amino-acid chain: Molybdenum cofactor sulfurase (937 aa).

The residue at position 237 (lysine 237) is an N6-(pyridoxal phosphate)lysine. Cysteine 397 is a catalytic residue. Disordered stretches follow at residues 633 to 710 (GQGK…RRIL), 756 to 795 (PSPS…KLNP), and 897 to 921 (KEGT…GGNG). Over residues 638-652 (MTRHAKAHLQRHQHQ) the composition is skewed to basic residues. Residues 682–935 (TPPSPPDSDT…VRVGDVVRPS (254 aa)) enclose the MOSC domain. Low complexity predominate over residues 756–767 (PSPSTPSASPSN). The segment covering 900 to 921 (TGMGMGTGTGTGTGTRSMGGNG) has biased composition (gly residues).

This sequence belongs to the class-V pyridoxal-phosphate-dependent aminotransferase family. MOCOS subfamily. The cofactor is pyridoxal 5'-phosphate.

The catalysed reaction is Mo-molybdopterin + L-cysteine + AH2 = thio-Mo-molybdopterin + L-alanine + A + H2O. It participates in cofactor biosynthesis; molybdopterin biosynthesis. Functionally, sulfurates the molybdenum cofactor. Sulfation of molybdenum is essential for xanthine dehydrogenase (XDH) and aldehyde oxidase (ADO) enzymes in which molybdenum cofactor is liganded by 1 oxygen and 1 sulfur atom in active form. In Neurospora crassa (strain ATCC 24698 / 74-OR23-1A / CBS 708.71 / DSM 1257 / FGSC 987), this protein is Molybdenum cofactor sulfurase (nit-13).